The sequence spans 705 residues: Kinesin-like protein KIF2A (705 aa).

The interval 65–185 is disordered; that stretch reads DLVPDEDIEP…QQELREKRAQ (121 aa). Phosphoserine is present on Ser75. Position 96 is a phosphothreonine (Thr96). Residue Ser99 is modified to Phosphoserine. Lys101 carries the N6-acetyllysine modification. Residues 122–139 show a composition bias toward polar residues; that stretch reads LPEQSSSAQQNGSVSDIS. Ser134 and Ser139 each carry phosphoserine. Positions 153-186 form a coiled coil; the sequence is RRKSNCVKEVEKLQEKREKRRLQQQELREKRAQD. Residues 158–185 show a composition bias toward basic and acidic residues; the sequence is CVKEVEKLQEKREKRRLQQQELREKRAQ. The Kinesin motor domain maps to 222-552; that stretch reads RICVCVRKRP…LRYANRVKEL (331 aa). An ATP-binding site is contributed by 312-319; sequence GQTGSGKT. Gln572 is modified (phosphoserine). The stretch at 659–698 forms a coiled coil; sequence ATQLEAILEQKIDILTELRDKVKSFRAALQEEEQASKQIN.

It belongs to the TRAFAC class myosin-kinesin ATPase superfamily. Kinesin family. MCAK/KIF2 subfamily. As to quaternary structure, interacts with AURKA and PLK1. Interacts with PSRC1. Interacts with MCRS1; the interaction enhances recruitment of KIF2A to the minus ends of spindle microtubules which promotes chromosome alignment.

It localises to the cytoplasm. It is found in the cytoskeleton. Its subcellular location is the microtubule organizing center. The protein resides in the centrosome. The protein localises to the spindle pole. It localises to the spindle. Its function is as follows. Plus end-directed microtubule-dependent motor required for normal brain development. May regulate microtubule dynamics during axonal growth. Required for normal progression through mitosis. Required for normal congress of chromosomes at the metaphase plate. Required for normal spindle dynamics during mitosis. Promotes spindle turnover. Implicated in formation of bipolar mitotic spindles. Has microtubule depolymerization activity. The chain is Kinesin-like protein KIF2A from Rattus norvegicus (Rat).